A 363-amino-acid chain; its full sequence is Zinc finger CCCH domain-containing protein 53 (363 aa).

The segment at 154–181 adopts a C3H1-type zinc-finger fold; that stretch reads KNRPKICSFYTIGQCKRGAECSFRHEMP. Positions 225–310 constitute an RRM domain; that stretch reads KTLYVGGLNS…PPNEYSHYPS (86 aa). Positions 281–348 are disordered; sequence LISQQQNQHS…SYSYPMPPHQ (68 aa). Residues 283-297 are compositionally biased toward low complexity; that stretch reads SQQQNQHSQMQQYYM. Residues 320–336 show a composition bias toward polar residues; that stretch reads FSTQESDGSSTSENNRA.

The sequence is that of Zinc finger CCCH domain-containing protein 53 from Arabidopsis thaliana (Mouse-ear cress).